A 126-amino-acid polypeptide reads, in one-letter code: UPF0212 protein TON_0350 (126 aa).

It belongs to the UPF0212 family.

The protein is UPF0212 protein TON_0350 of Thermococcus onnurineus (strain NA1).